The sequence spans 283 residues: Elongation factor Ts (283 aa).

The segment at 79 to 82 (TDFV) is involved in Mg(2+) ion dislocation from EF-Tu.

This sequence belongs to the EF-Ts family.

Its subcellular location is the cytoplasm. Its function is as follows. Associates with the EF-Tu.GDP complex and induces the exchange of GDP to GTP. It remains bound to the aminoacyl-tRNA.EF-Tu.GTP complex up to the GTP hydrolysis stage on the ribosome. The chain is Elongation factor Ts from Shewanella baltica (strain OS155 / ATCC BAA-1091).